The chain runs to 348 residues: Putative 4-hydroxythreonine-4-phosphate dehydrogenase 2 (348 aa).

His-180, His-224, and His-279 together coordinate a divalent metal cation.

The protein belongs to the PdxA family. As to quaternary structure, homodimer. It depends on Zn(2+) as a cofactor. The cofactor is Mg(2+). Co(2+) serves as cofactor.

Its subcellular location is the cytoplasm. The enzyme catalyses 4-(phosphooxy)-L-threonine + NAD(+) = 3-amino-2-oxopropyl phosphate + CO2 + NADH. It functions in the pathway cofactor biosynthesis; pyridoxine 5'-phosphate biosynthesis; pyridoxine 5'-phosphate from D-erythrose 4-phosphate: step 4/5. In terms of biological role, catalyzes the NAD(P)-dependent oxidation of 4-(phosphooxy)-L-threonine (HTP) into 2-amino-3-oxo-4-(phosphooxy)butyric acid which spontaneously decarboxylates to form 3-amino-2-oxopropyl phosphate (AHAP). In Rhizobium meliloti (strain 1021) (Ensifer meliloti), this protein is Putative 4-hydroxythreonine-4-phosphate dehydrogenase 2.